A 175-amino-acid chain; its full sequence is ATP-dependent protease subunit HslV (175 aa).

The active site involves Thr2. The Na(+) site is built by Ala156, Cys159, and Thr162.

This sequence belongs to the peptidase T1B family. HslV subfamily. In terms of assembly, a double ring-shaped homohexamer of HslV is capped on each side by a ring-shaped HslU homohexamer. The assembly of the HslU/HslV complex is dependent on binding of ATP.

The protein resides in the cytoplasm. It catalyses the reaction ATP-dependent cleavage of peptide bonds with broad specificity.. Allosterically activated by HslU binding. Functionally, protease subunit of a proteasome-like degradation complex believed to be a general protein degrading machinery. The protein is ATP-dependent protease subunit HslV of Rhizobium rhizogenes (strain K84 / ATCC BAA-868) (Agrobacterium radiobacter).